Here is a 122-residue protein sequence, read N- to C-terminus: Basic phospholipase A2 (122 aa).

7 cysteine pairs are disulfide-bonded: cysteine 26-cysteine 115, cysteine 28-cysteine 44, cysteine 43-cysteine 95, cysteine 49-cysteine 122, cysteine 50-cysteine 88, cysteine 57-cysteine 81, and cysteine 75-cysteine 86. Positions 27, 29, and 31 each coordinate Ca(2+). The active site involves histidine 47. A Ca(2+)-binding site is contributed by aspartate 48. Residue aspartate 89 is part of the active site.

The protein belongs to the phospholipase A2 family. Group II subfamily. D49 sub-subfamily. Ca(2+) is required as a cofactor. Expressed by the venom gland.

Its subcellular location is the secreted. The enzyme catalyses a 1,2-diacyl-sn-glycero-3-phosphocholine + H2O = a 1-acyl-sn-glycero-3-phosphocholine + a fatty acid + H(+). Its function is as follows. Snake venom phospholipase A2 (PLA2) that does not inhibit platelet aggregation. Exhibits cytotoxic and anticoagulant activity. Induces Ehrlich tumor growth but not angiogenesis. PLA2 catalyzes the calcium-dependent hydrolysis of the 2-acyl groups in 3-sn-phosphoglycerides. This Bothrops leucurus (Whitetail lancehead) protein is Basic phospholipase A2.